Reading from the N-terminus, the 268-residue chain is Undecaprenyl-diphosphatase (268 aa).

The next 7 helical transmembrane spans lie at 5 to 25, 43 to 63, 84 to 104, 109 to 129, 184 to 204, 213 to 233, and 248 to 268; these read SIISALVLGLIEGLTEFIPVS, GNTFAVLIQLGAILAILLVYF, LSVLLAFLPAALIGAAAHGFI, FETPMLICVVLIVGGIILYVI, AAEFSFFLAMPTMVGAFALDL, IDDIGLIAAGFIAAFIAGIFV, and PFAIWRILVGTAGLVGLWLLG.

Belongs to the UppP family.

The protein resides in the cell inner membrane. It catalyses the reaction di-trans,octa-cis-undecaprenyl diphosphate + H2O = di-trans,octa-cis-undecaprenyl phosphate + phosphate + H(+). Catalyzes the dephosphorylation of undecaprenyl diphosphate (UPP). Confers resistance to bacitracin. In Sinorhizobium medicae (strain WSM419) (Ensifer medicae), this protein is Undecaprenyl-diphosphatase.